We begin with the raw amino-acid sequence, 245 residues long: 4-hydroxy-tetrahydrodipicolinate reductase (245 aa).

NAD(+)-binding positions include 7–12, 75–77, and 102–105; these read GAKGKV, GTT, and APNF. Residue H132 is the Proton donor/acceptor of the active site. Position 133 (H133) interacts with (S)-2,3,4,5-tetrahydrodipicolinate. The active-site Proton donor is the K136. A (S)-2,3,4,5-tetrahydrodipicolinate-binding site is contributed by 142–143; it reads GT.

Belongs to the DapB family.

The protein localises to the cytoplasm. The enzyme catalyses (S)-2,3,4,5-tetrahydrodipicolinate + NAD(+) + H2O = (2S,4S)-4-hydroxy-2,3,4,5-tetrahydrodipicolinate + NADH + H(+). It catalyses the reaction (S)-2,3,4,5-tetrahydrodipicolinate + NADP(+) + H2O = (2S,4S)-4-hydroxy-2,3,4,5-tetrahydrodipicolinate + NADPH + H(+). It functions in the pathway amino-acid biosynthesis; L-lysine biosynthesis via DAP pathway; (S)-tetrahydrodipicolinate from L-aspartate: step 4/4. Its function is as follows. Catalyzes the conversion of 4-hydroxy-tetrahydrodipicolinate (HTPA) to tetrahydrodipicolinate. The chain is 4-hydroxy-tetrahydrodipicolinate reductase from Mycobacterium tuberculosis (strain ATCC 25177 / H37Ra).